A 694-amino-acid polypeptide reads, in one-letter code: Follicle-stimulating hormone receptor (694 aa).

The first 17 residues, 1 to 17 (MAFLWISFLVFLGSGSG), serve as a signal peptide directing secretion. 2 disulfides stabilise this stretch: cysteine 18–cysteine 25 and cysteine 23–cysteine 32. One can recognise an LRRNT domain in the interval 18-46 (CHHRICHCSDRVFICQESKVTEIPSDIPR). Residues 18-367 (CHHRICHCSD…EDIMGYNFLR (350 aa)) lie on the Extracellular side of the membrane. LRR repeat units lie at residues 49 to 72 (VEMR…FRDL), 73 to 97 (EKIE…LPKL), 98 to 118 (HEIR…AFWN), 119 to 143 (LPNL…KIQS), 144 to 169 (HQKV…AGLS), 170 to 192 (SESE…AFNG), 193 to 216 (TQLD…IFQG), 217 to 240 (ANGP…GLKN), and 241 to 259 (LKKL…PNLD). Asparagine 191 and asparagine 199 each carry an N-linked (GlcNAc...) asparagine glycan. Asparagine 268 carries N-linked (GlcNAc...) asparagine glycosylation. 4 cysteine pairs are disulfide-bonded: cysteine 275/cysteine 347, cysteine 276/cysteine 292, cysteine 276/cysteine 357, and cysteine 292/cysteine 339. Asparagine 293 is a glycosylation site (N-linked (GlcNAc...) asparagine). The residue at position 336 (tyrosine 336) is a Sulfotyrosine. Residues 368–388 (VLIWFISILSITGNIVVLVIL) form a helical membrane-spanning segment. The Cytoplasmic portion of the chain corresponds to 389–399 (ITSQYKLTVPR). The chain crosses the membrane as a helical span at residues 400-422 (FLMCNLAFADLCIGIYLLLIASV). Topologically, residues 423-444 (DIHTKSQYHNYAIDWQTGAGCD) are extracellular. Cysteines 443 and 518 form a disulfide. A helical transmembrane segment spans residues 445-466 (AAGFFTVFASELSVYTLTAITL). The Cytoplasmic segment spans residues 467 to 486 (ERWHTITYAMQLDRKVRLRH). The chain crosses the membrane as a helical span at residues 487–509 (AASIMLIGWIFAFSVALLPIFGV). The Extracellular segment spans residues 510 to 529 (SSYMKVSICLPMDIDSPLSQ). Residues 530-551 (FYVISLLVLNVLASVIICTCYT) form a helical membrane-spanning segment. At 552-574 (HIYFTVRNPNIISSTSDAKIAKR) the chain is on the cytoplasmic side. A helical transmembrane segment spans residues 575-598 (MAMLIFTDFLCMAPISFFAISASV). Residues 599 to 609 (KMPLITVSKSK) are Extracellular-facing. A helical transmembrane segment spans residues 610–631 (ILLVLFYPINSCANPFLYAVFT). The Cytoplasmic portion of the chain corresponds to 632-694 (KTFRRDFFIL…YKLVPLNHLS (63 aa)).

It belongs to the G-protein coupled receptor 1 family. FSH/LSH/TSH subfamily. In terms of assembly, homotrimer. Functions as a homotrimer binding the FSH hormone heterodimer composed of CGA and FSHB. Interacts with ARRB2. Interacts with APPL2; interaction is independent of follicle stimulating hormone stimulation. N-glycosylated; indirectly required for FSH-binding, possibly via a conformational change that allows high affinity binding of hormone. In terms of processing, sulfated.

It is found in the cell membrane. Functionally, g protein-coupled receptor for follitropin, the follicle-stimulating hormone. Through cAMP production activates the downstream PI3K-AKT and ERK1/ERK2 signaling pathways. The chain is Follicle-stimulating hormone receptor (FSHR) from Notamacropus eugenii (Tammar wallaby).